Consider the following 120-residue polypeptide: uncharacterized protein (120 aa).

Positions 80-99 are disordered; it reads PTRKLQTPLNEPPRTWRKTA.

This is an uncharacterized protein from Goose circovirus (GoCV).